The chain runs to 456 residues: Aminotransferase ALD1, chloroplastic (456 aa).

Residues 1–43 constitute a chloroplast transit peptide; it reads MVSLMFFSSASPLCSSPSKIPKASLDFEMKKLGGSTKLVRNVN. Pyridoxal 5'-phosphate-binding positions include Tyr-108, 142–143, Asn-223, Asp-251, Tyr-254, Ser-281, Ser-283, Arg-292, and Asn-323; that span reads AQ.

This sequence belongs to the class-I pyridoxal-phosphate-dependent aminotransferase family. LL-diaminopimelate aminotransferase subfamily. Pyridoxal 5'-phosphate is required as a cofactor. In terms of tissue distribution, highly expressed in senescing leaves, flowers, siliques and seeds.

The protein resides in the plastid. Its subcellular location is the chloroplast. Its function is as follows. Aminotransferase involved in local and systemic acquired resistance (SAR) to the bacterial pathogen P.syringae. Required for salicylic acid (SA) and camalexin accumulation upon pathogen infection. Possesses aminotransferase activity in vitro and may generate amino-acid-derived defense signals in vivo. May be involved in ethylene-induced senescence signaling. Involved in the biosynthesis of pipecolate (Pip), a metabolite that orchestrates defense amplification, positive regulation of SA biosynthesis, and priming to guarantee effective local resistance induction and the establishment of SAR. Converts lysine to alpha-keto-epsilon-aminocaproate, which then can spontaneously cyclize to form delta-(1)-piperideine-2-carboxylate (P2C). P2C is converted to Pip by SARD4. May produce non-Pip metabolites that play roles in immunity. Involved in the synthesis of distinct metabolite signals that affect basal and early defenses, and later defense responses. This Arabidopsis thaliana (Mouse-ear cress) protein is Aminotransferase ALD1, chloroplastic.